The chain runs to 103 residues: MFKDFDFSKMGEMLSEAQKKAAEFENEIAAKEFVAKSGGGLISVKANGRSQILDISIDDTLLEDKESLQILLISAINDAIKLSEDEKKRAASAMFGGLGGFGV.

It belongs to the YbaB/EbfC family. Homodimer.

It is found in the cytoplasm. The protein localises to the nucleoid. In terms of biological role, binds to DNA and alters its conformation. May be involved in regulation of gene expression, nucleoid organization and DNA protection. The sequence is that of Nucleoid-associated protein CFF8240_0066 from Campylobacter fetus subsp. fetus (strain 82-40).